The sequence spans 385 residues: Probable di-N-acetylchitobiase 2 (385 aa).

A signal peptide spans 1–15; that stretch reads MRIILLLFLIVFVVA. In terms of domain architecture, GH18 spans 16-377; it reads QSSSSSSSSG…DALASFFPQS (362 aa). 2 N-linked (GlcNAc...) asparagine glycosylation sites follow: asparagine 51 and asparagine 101. Glutamate 129 functions as the Proton donor in the catalytic mechanism. Residues asparagine 223, asparagine 272, and asparagine 296 are each glycosylated (N-linked (GlcNAc...) asparagine).

It belongs to the glycosyl hydrolase 18 family.

The protein localises to the lysosome. Its function is as follows. Involved in the degradation of asparagine-linked glycoproteins. May hydrolyze of N-acetyl-beta-D-glucosamine (1-4)N-acetylglucosamine chitobiose core from the reducing end of the bond. This chain is Probable di-N-acetylchitobiase 2 (ctbs2), found in Dictyostelium discoideum (Social amoeba).